Consider the following 122-residue polypeptide: Iron-sulfur cluster insertion protein ErpA (122 aa).

The iron-sulfur cluster site is built by cysteine 50, cysteine 114, and cysteine 116.

Belongs to the HesB/IscA family. In terms of assembly, homodimer. Iron-sulfur cluster serves as cofactor.

Required for insertion of 4Fe-4S clusters for at least IspG. The chain is Iron-sulfur cluster insertion protein ErpA from Alkalilimnicola ehrlichii (strain ATCC BAA-1101 / DSM 17681 / MLHE-1).